Consider the following 323-residue polypeptide: tRNA dimethylallyltransferase (323 aa).

12–19 (GPTASGKT) is an ATP binding site. 14 to 19 (TASGKT) is a substrate binding site. Interaction with substrate tRNA stretches follow at residues 37-40 (DSAL) and 161-165 (QRLVR).

Belongs to the IPP transferase family. In terms of assembly, monomer. The cofactor is Mg(2+).

The catalysed reaction is adenosine(37) in tRNA + dimethylallyl diphosphate = N(6)-dimethylallyladenosine(37) in tRNA + diphosphate. Functionally, catalyzes the transfer of a dimethylallyl group onto the adenine at position 37 in tRNAs that read codons beginning with uridine, leading to the formation of N6-(dimethylallyl)adenosine (i(6)A). This chain is tRNA dimethylallyltransferase, found in Stutzerimonas stutzeri (strain A1501) (Pseudomonas stutzeri).